We begin with the raw amino-acid sequence, 763 residues long: DNA-binding protein SATB1 (763 aa).

The span at methionine 1–glutamate 15 shows a compositional bias: basic and acidic residues. A disordered region spans residues methionine 1 to glycine 54. A Nuclear localization signal motif is present at residues valine 20–leucine 40. Residue lysine 51 forms a Glycyl lysine isopeptide (Lys-Gly) (interchain with G-Cter in SUMO2) linkage. The CMP domain maps to glycine 71–serine 172. Lysine 136 bears the N6-acetyllysine mark. The Protein interaction signature appears at proline 139–serine 143. One can recognise a CUTL domain in the interval lysine 175–aspartate 248. Serine 185 is modified (phosphoserine). Positions tyrosine 224–threonine 278 are nuclear matrix targeting sequence (NMTS). Residues histidine 266 to valine 296 are compositionally biased toward polar residues. A disordered region spans residues histidine 266–leucine 307. DNA-binding regions (CUT) lie at residues leucine 361–arginine 448 and asparagine 484–serine 571. DNA is bound by residues glutamine 390, arginine 400 to arginine 410, and asparagine 425. Positions glutamine 591 to glutamine 607 are enriched in low complexity. The segment at glutamine 591–threonine 649 is disordered. Serine 637 is modified (phosphoserine). A DNA-binding region (homeobox) is located at residues threonine 645 to glycine 704. A Glycyl lysine isopeptide (Lys-Gly) (interchain with G-Cter in SUMO) cross-link involves residue lysine 744.

The protein belongs to the CUT homeobox family. Interacts with CUX1 (via DNA-binding domains); the interaction inhibits the attachment of both proteins to DNA. Homodimer. Part of the nuclear protein complex gamma-globin promoter and enhancer binding factor (gamma-PE) composed at least of SATB1 and HOXB2. Interaction with CtBP1 when not acetylated stabilizes attachment to DNA and promotes transcription repression. Interacts with PCAF. Interacts with sumoylated PML and HDAC1 via the CMP domain. Interacts also with DYNLT3 and POLR2J2. Binds to EP300. As to quaternary structure, (Microbial infection) Interacts (via the CMP domain) with HIV-1 Tat. Sumoylated. Sumoylation promotes cleavage by caspases. In terms of processing, phosphorylated by PKC. Acetylated by PCAF. Phosphorylated form interacts with HDAC1, but unphosphorylated form interacts with PCAF. DNA binding properties are activated by phosphorylation and inactivated by acetylation. In opposition, gene expression is down-regulated by phosphorylation but up-regulated by acetylation. Post-translationally, cleaved at Asp-254 by caspase-3 and caspase-6 during T-cell apoptosis in thymus and during B-cell stimulation. The cleaved forms cannot dimerize and lose transcription regulation function because of impaired DNA and chromatin association. As to expression, expressed predominantly in thymus.

The protein localises to the nucleus matrix. It is found in the nucleus. Its subcellular location is the PML body. In terms of biological role, crucial silencing factor contributing to the initiation of X inactivation mediated by Xist RNA that occurs during embryogenesis and in lymphoma. Binds to DNA at special AT-rich sequences, the consensus SATB1-binding sequence (CSBS), at nuclear matrix- or scaffold-associated regions. Thought to recognize the sugar-phosphate structure of double-stranded DNA. Transcriptional repressor controlling nuclear and viral gene expression in a phosphorylated and acetylated status-dependent manner, by binding to matrix attachment regions (MARs) of DNA and inducing a local chromatin-loop remodeling. Acts as a docking site for several chromatin remodeling enzymes (e.g. PML at the MHC-I locus) and also by recruiting corepressors (HDACs) or coactivators (HATs) directly to promoters and enhancers. Modulates genes that are essential in the maturation of the immune T-cell CD8SP from thymocytes. Required for the switching of fetal globin species, and beta- and gamma-globin genes regulation during erythroid differentiation. Plays a role in chromatin organization and nuclear architecture during apoptosis. Interacts with the unique region (UR) of cytomegalovirus (CMV). Alu-like motifs and SATB1-binding sites provide a unique chromatin context which seems preferentially targeted by the HIV-1 integration machinery. Moreover, HIV-1 Tat may overcome SATB1-mediated repression of IL2 and IL2RA (interleukin) in T-cells by binding to the same domain than HDAC1. Delineates specific epigenetic modifications at target gene loci, directly up-regulating metastasis-associated genes while down-regulating tumor-suppressor genes. Reprograms chromatin organization and the transcription profiles of breast tumors to promote growth and metastasis. Promotes neuronal differentiation of neural stem/progenitor cells in the adult subventricular zone, possibly by positively regulating the expression of NEUROD1. The sequence is that of DNA-binding protein SATB1 from Homo sapiens (Human).